We begin with the raw amino-acid sequence, 562 residues long: Non-homologous end joining factor IFFO1 (562 aa).

Residues 65 to 116 form an LMNA binding region; that stretch reads ALRNDLGSNINVLKTLNLRFRCFLAKVHELERRNRLLEKQLQQALEEGKQGR. The IF rod domain maps to 73–529; that stretch reads NINVLKTLNL…RLITQSGDRK (457 aa). Residues 85–117 are a coiled coil; the sequence is RCFLAKVHELERRNRLLEKQLQQALEEGKQGRR. The disordered stretch occupies residues 154-187; that stretch reads RVLGSPSRSPAGPLASSAACHTSSSTSTSTAFSS. Over residues 168–187 the composition is skewed to low complexity; sequence ASSAACHTSSSTSTSTAFSS. Residues 237-301 adopt a coiled-coil conformation; it reads EIRALYNVLA…MKVEQLKAEL (65 aa). Positions 364 to 401 are disordered; it reads MGGRKRERKAAVEEDTSLSESDGPRQPEGAEEESTALS. The XCCR4 binding. Required for localization to the double-strand breaks (DSBs) stretch occupies residues 453 to 528; that stretch reads EQEDSLEKVI…RRLITQSGDR (76 aa). Residues 458–504 are a coiled coil; it reads LEKVIKDTESLFKTREKEYQETIDQIELELATAKNDMNRHLHEYMEM. The disordered stretch occupies residues 523–562; it reads TQSGDRKSPAFTAVPLSDPPPPPSETEDSDRDVSSDSSMR. A compositionally biased stretch (basic and acidic residues) spans 553–562; the sequence is RDVSSDSSMR.

The protein belongs to the intermediate filament family. As to quaternary structure, forms a heterotetramer with XRCC4. The interaction with XRCC4 is direct, involves LIG4-free XRCC4 and leads to relocalization of IFFO1 at the double-strand break (DSB) sites. Interacts with LMNA; the interaction forms an interior nucleoskeleton and the recruitment to DNA double-strand breaks.

The protein resides in the nucleus. It is found in the nucleoplasm. The protein localises to the nucleus inner membrane. It localises to the nucleus matrix. Functionally, nuclear matrix protein involved in the immobilization of broken DNA ends and the suppression of chromosome translocation during DNA double-strand breaks (DSBs). Interacts with the nuclear lamina component LMNA, resulting in the formation of a nucleoskeleton that will relocalize to the DSB sites in a XRCC4-dependent manner and promote the immobilization of the broken ends, thereby preventing chromosome translocation. Acts as a scaffold that allows the DNA repair protein XRCC4 and LMNA to assemble into a complex at the DSB sites. The chain is Non-homologous end joining factor IFFO1 from Mus musculus (Mouse).